The primary structure comprises 258 residues: Capsid protein (258 aa).

A Bipartite nuclear localization signal motif is present at residues 3–20 (KRPGDIIISTPGSKVRRR). The short motif at 41–55 (RKRAWVNRPMYRKPT) is the Nuclear localization signal element. The segment at 69–86 (CEGPCKVQSFEQRDDVKH) is a zinc-finger region. The Nuclear export signal motif lies at 102 to 123 (LTHRVGKRFCIKSIYILGKIWL). The Bipartite nuclear localization signal signature appears at 202-249 (KRFYRLNHHVTYNHQEAGKYENHTENALLLYMACTHASNPVYATLKIR).

It belongs to the geminiviridae capsid protein family. As to quaternary structure, homomultimer. Binds to single-stranded and double-stranded viral DNA. Interacts (via nuclear localization signals) with host importin alpha-1a.

The protein localises to the virion. Its subcellular location is the host nucleus. Functionally, encapsidates the viral DNA into characteristic twinned ('geminate') particles. Binds the genomic viral ssDNA and shuttles it into and out of the cell nucleus. The CP of bipartite geminiviruses is not required for cell-to-cell or systemic movement. The protein is Capsid protein of African cassava mosaic virus (isolate West Kenyan 844) (ACMV).